The primary structure comprises 424 residues: Formyl-CoA:oxalate CoA-transferase (424 aa).

CoA is bound by residues 17-18, R38, 96-98, R104, and 136-139; these read QS, NFA, and KVYE. The Nucleophile role is filled by D168. 247 to 249 lines the substrate pocket; sequence GGQ.

This sequence belongs to the CoA-transferase III family. Frc subfamily. In terms of assembly, homodimer.

It catalyses the reaction formyl-CoA + oxalate = oxalyl-CoA + formate. Its pathway is metabolic intermediate degradation; oxalate degradation; CO(2) and formate from oxalate: step 1/2. In terms of biological role, involved in the catabolism of oxalate and in the adapatation to low pH via the induction of the oxalate-dependent acid tolerance response (ATR). Catalyzes the transfer of the CoA moiety from formyl-CoA to oxalate. The polypeptide is Formyl-CoA:oxalate CoA-transferase (Afipia carboxidovorans (strain ATCC 49405 / DSM 1227 / KCTC 32145 / OM5) (Oligotropha carboxidovorans)).